Here is a 111-residue protein sequence, read N- to C-terminus: Nucleoid-associated protein Tmel_0542 (111 aa).

It belongs to the YbaB/EbfC family. As to quaternary structure, homodimer.

Its subcellular location is the cytoplasm. The protein resides in the nucleoid. Functionally, binds to DNA and alters its conformation. May be involved in regulation of gene expression, nucleoid organization and DNA protection. The sequence is that of Nucleoid-associated protein Tmel_0542 from Thermosipho melanesiensis (strain DSM 12029 / CIP 104789 / BI429).